A 420-amino-acid polypeptide reads, in one-letter code: Probable pectate lyase C (420 aa).

The N-terminal stretch at 1–20 (MKLSEPLLVSLAAFSQAVTA) is a signal peptide. 3 N-linked (GlcNAc...) asparagine glycosylation sites follow: Asn-49, Asn-165, and Asn-202. The active site involves Arg-205. The region spanning 262–297 (NANFHGYVQNNYYDPDKDGQLDGFELGVSSSNYGGM) is the EF-hand domain. Ca(2+)-binding residues include Asp-275, Asp-277, Asp-279, Gln-281, and Glu-286. Residues 358-396 (TMGGPGTLNGGTPAKDTDGDGIPDEAEKQLGTDPNTNDS) are disordered. A glycan (N-linked (GlcNAc...) asparagine) is linked at Asn-394.

It belongs to the polysaccharide lyase 1 family. The cofactor is Ca(2+).

The protein resides in the secreted. The enzyme catalyses Eliminative cleavage of (1-&gt;4)-alpha-D-galacturonan to give oligosaccharides with 4-deoxy-alpha-D-galact-4-enuronosyl groups at their non-reducing ends.. Its function is as follows. Pectinolytic enzyme consist of four classes of enzymes: pectin lyase, polygalacturonase, pectin methylesterase and rhamnogalacturonase. Among pectinolytic enzymes, pectin lyase is the most important in depolymerization of pectin, since it cleaves internal glycosidic bonds of highly methylated pectins. Favors pectate, the anion, over pectin, the methyl ester. The chain is Probable pectate lyase C (plyC) from Aspergillus fumigatus (strain ATCC MYA-4609 / CBS 101355 / FGSC A1100 / Af293) (Neosartorya fumigata).